Here is a 161-residue protein sequence, read N- to C-terminus: PHD finger-containing protein 4 (161 aa).

The segment at 30–80 (KKPCEVCGSNANDHAIMTCFLCRDTREHIYCARVHLRSVPRMWICEECRMN) adopts a PHD-type zinc-finger fold. Cys-33, Cys-36, Cys-48, Cys-51, His-57, Cys-60, Cys-74, and Cys-77 together coordinate Zn(2+). Residues 114-132 (TMTSSDSGNQISATHQQPP) are compositionally biased toward polar residues. The disordered stretch occupies residues 114–161 (TMTSSDSGNQISATHQQPPQAHASPVAVPMDTSSSDNQQPPSDSESAI). A compositionally biased stretch (low complexity) spans 146–161 (SSSDNQQPPSDSESAI).

As to quaternary structure, interacts directly with AIPP3/BDT1.

Functionally, together with AIPP3/BDT1, cooperates to form a BAH-PHD bivalent histone reader complex able to read histone H3 lysine 27 trimethylation (H3K27me3) histone marks in order to regulate transcription, especially to prevent early flowering; promotes AIPP3/BDT1 binding to H3K27me3. The polypeptide is PHD finger-containing protein 4 (Arabidopsis thaliana (Mouse-ear cress)).